Reading from the N-terminus, the 201-residue chain is Holliday junction branch migration complex subunit RuvA (201 aa).

The segment at 1–64 (MYEYIKGKYI…QDFIGLYGFL (64 aa)) is domain I. The segment at 65–143 (TKDELEMFNK…STDISKGNSE (79 aa)) is domain II. A flexible linker region spans residues 144–154 (INNLDVDYDEH). A domain III region spans residues 154-201 (HSKKLEEVRFALNSLGYSEKETDRAINNVDKSEGIENIIKSCLRFLMN).

Belongs to the RuvA family. In terms of assembly, homotetramer. Forms an RuvA(8)-RuvB(12)-Holliday junction (HJ) complex. HJ DNA is sandwiched between 2 RuvA tetramers; dsDNA enters through RuvA and exits via RuvB. An RuvB hexamer assembles on each DNA strand where it exits the tetramer. Each RuvB hexamer is contacted by two RuvA subunits (via domain III) on 2 adjacent RuvB subunits; this complex drives branch migration. In the full resolvosome a probable DNA-RuvA(4)-RuvB(12)-RuvC(2) complex forms which resolves the HJ.

The protein localises to the cytoplasm. The RuvA-RuvB-RuvC complex processes Holliday junction (HJ) DNA during genetic recombination and DNA repair, while the RuvA-RuvB complex plays an important role in the rescue of blocked DNA replication forks via replication fork reversal (RFR). RuvA specifically binds to HJ cruciform DNA, conferring on it an open structure. The RuvB hexamer acts as an ATP-dependent pump, pulling dsDNA into and through the RuvAB complex. HJ branch migration allows RuvC to scan DNA until it finds its consensus sequence, where it cleaves and resolves the cruciform DNA. This Clostridium acetobutylicum (strain ATCC 824 / DSM 792 / JCM 1419 / IAM 19013 / LMG 5710 / NBRC 13948 / NRRL B-527 / VKM B-1787 / 2291 / W) protein is Holliday junction branch migration complex subunit RuvA.